Consider the following 620-residue polypeptide: Chaperone protein HscA homolog (620 aa).

Belongs to the heat shock protein 70 family.

Its function is as follows. Chaperone involved in the maturation of iron-sulfur cluster-containing proteins. Has a low intrinsic ATPase activity which is markedly stimulated by HscB. The sequence is that of Chaperone protein HscA homolog from Shewanella loihica (strain ATCC BAA-1088 / PV-4).